The chain runs to 356 residues: MNLSIKENKETVRPVFPFTAIVGQEEMKLALMLNVIDPKIGGVMIMGDRGTGKSTTIRAIADLLPKIEIVKDDLFNSHPSDVDLMSDENKHALQNGINIDKAYIKVPMVDLPLGATEDRVCGTIDIEKALTEGVKTFEPGLLAKANRGILYVDEVNLLDDHLVDILLDSAASGWNTVEREGISVRHPARFVLVGSGNPEEGELRPQLLDRFGMHAEIRTVKDPELRVQIVEQRTNFDQDPKKCIENCAKDQIKLKQQIADAQLLLSTITIDYDLRVKISQVCGELDVDGLRGDIVTNRAAKAYAAFNGQQTVNSSDISKVITLCLRHRLRKDPLESMDSGEKVEKVFNKVFNLEEI.

Position 47-54 (47-54 (GDRGTGKS)) interacts with ATP.

It belongs to the Mg-chelatase subunits D/I family.

Its subcellular location is the plastid. It localises to the chloroplast. It catalyses the reaction protoporphyrin IX + Mg(2+) + ATP + H2O = Mg-protoporphyrin IX + ADP + phosphate + 3 H(+). Its pathway is porphyrin-containing compound metabolism; chlorophyll biosynthesis. Its function is as follows. Involved in chlorophyll biosynthesis; introduces a magnesium ion into protoporphyrin IX to yield Mg-protoporphyrin IX. This chain is Magnesium-chelatase subunit ChlI (chlI), found in Porphyra purpurea (Red seaweed).